The sequence spans 337 residues: Mitochondrial metalloendopeptidase OMA1 (337 aa).

Residues 1 to 68 are Mitochondrial matrix-facing; the sequence is MFLNKYISNY…QPNPRDKRFQ (68 aa). A helical transmembrane segment spans residues 69-89; it reads WIFGALIAGGGVYYFTHLEYV. The Mitochondrial intermembrane segment spans residues 90-337; the sequence is PISNRRRFND…MLQSFKEVHW (248 aa). Histidine 195 lines the Zn(2+) pocket. Residue glutamate 196 is part of the active site. Residues histidine 199 and glutamate 250 each contribute to the Zn(2+) site. Cysteines 265 and 321 form a disulfide.

The protein belongs to the peptidase M48 family. Requires Zn(2+) as cofactor.

It is found in the mitochondrion inner membrane. Its activity is regulated as follows. Protease activity is induced in response to various mitochondrial stress. Functionally, protease that is part of the quality control system in the inner membrane of mitochondria. Cleaves and thereby promotes the turnover of mistranslated or misfolded membrane protein. The sequence is that of Mitochondrial metalloendopeptidase OMA1 from Schizosaccharomyces pombe (strain 972 / ATCC 24843) (Fission yeast).